We begin with the raw amino-acid sequence, 562 residues long: Arf-GAP domain and FG repeat-containing protein 1 (562 aa).

The 125-residue stretch at 11–135 (EKHLKMLRDM…WYVPPEQAKV (125 aa)) folds into the Arf-GAP domain. A C4-type zinc finger spans residues 29–52 (CFDCDQRGPTYVNMTVGSFVCTSC). Residues 145–193 (GSSASSTSSTPEVKPLKSLLGDSAPTLHLNKGTPSQSPVVGRSQGQQQE) are disordered. A Phosphoserine modification is found at serine 167. Polar residues predominate over residues 176-191 (GTPSQSPVVGRSQGQQ). Threonine 177 is modified (phosphothreonine). Phosphoserine is present on residues serine 181 and serine 362. O-linked (GlcNAc) serine glycosylation occurs at serine 367.

As to quaternary structure, interacts with EPS15R and EPS15. Interacts with FCHO1. Post-translationally, O-glycosylated. In terms of tissue distribution, ubiquitously expressed.

The protein resides in the nucleus. Its subcellular location is the cytoplasmic vesicle. Its function is as follows. Required for vesicle docking or fusion during acrosome biogenesis. May play a role in RNA trafficking or localization. In case of infection by HIV-1, acts as a cofactor for viral Rev and promotes movement of Rev-responsive element-containing RNAs from the nuclear periphery to the cytoplasm. This step is essential for HIV-1 replication. This chain is Arf-GAP domain and FG repeat-containing protein 1 (AGFG1), found in Homo sapiens (Human).